A 306-amino-acid polypeptide reads, in one-letter code: Peroxisomal protein PEX21 (306 aa).

Residue C4 forms a Glycyl cysteine thioester (Cys-Gly) (interchain with G-Cter in ubiquitin) linkage. Residues 172-203 (ERQVQDDEKEQQQDKDDDFHLKETSPLDEDQR) are disordered.

The protein belongs to the peroxin-21 family. As to quaternary structure, interacts with PEX7. In terms of processing, monoubiquitinated at Cys-4; acts as a signal for PEX21 extraction and is required for proper export from peroxisomes and recycling.

It is found in the cytoplasm. It localises to the cytosol. The protein resides in the peroxisome. Mediates peroxisomal import of proteins containing a C-terminal PTS2-type peroxisomal targeting signal via its interaction with PEX7. Interaction with PEX7 only takes place when PEX7 is associated with cargo proteins containing a PTS2 peroxisomal targeting signal. PEX7 along with PTS2-containing cargo proteins are then translocated through the PEX13-PEX14 docking complex together with PEX21. The sequence is that of Peroxisomal protein PEX21 (PEX21) from Kluyveromyces lactis (strain ATCC 8585 / CBS 2359 / DSM 70799 / NBRC 1267 / NRRL Y-1140 / WM37) (Yeast).